The following is a 372-amino-acid chain: 4-hydroxy-3-methylbut-2-en-1-yl diphosphate synthase (flavodoxin) (372 aa).

Residues Cys-270, Cys-273, Cys-305, and Glu-312 each coordinate [4Fe-4S] cluster.

This sequence belongs to the IspG family. [4Fe-4S] cluster serves as cofactor.

It carries out the reaction (2E)-4-hydroxy-3-methylbut-2-enyl diphosphate + oxidized [flavodoxin] + H2O + 2 H(+) = 2-C-methyl-D-erythritol 2,4-cyclic diphosphate + reduced [flavodoxin]. It participates in isoprenoid biosynthesis; isopentenyl diphosphate biosynthesis via DXP pathway; isopentenyl diphosphate from 1-deoxy-D-xylulose 5-phosphate: step 5/6. Functionally, converts 2C-methyl-D-erythritol 2,4-cyclodiphosphate (ME-2,4cPP) into 1-hydroxy-2-methyl-2-(E)-butenyl 4-diphosphate. This is 4-hydroxy-3-methylbut-2-en-1-yl diphosphate synthase (flavodoxin) from Citrobacter koseri (strain ATCC BAA-895 / CDC 4225-83 / SGSC4696).